A 371-amino-acid chain; its full sequence is Aminomethyltransferase (371 aa).

Belongs to the GcvT family. In terms of assembly, the glycine cleavage system is composed of four proteins: P, T, L and H.

It catalyses the reaction N(6)-[(R)-S(8)-aminomethyldihydrolipoyl]-L-lysyl-[protein] + (6S)-5,6,7,8-tetrahydrofolate = N(6)-[(R)-dihydrolipoyl]-L-lysyl-[protein] + (6R)-5,10-methylene-5,6,7,8-tetrahydrofolate + NH4(+). The glycine cleavage system catalyzes the degradation of glycine. The chain is Aminomethyltransferase from Pectobacterium carotovorum subsp. carotovorum (strain PC1).